The following is a 191-amino-acid chain: 3-isopropylmalate dehydratase small subunit (191 aa).

It belongs to the LeuD family. LeuD type 1 subfamily. As to quaternary structure, heterodimer of LeuC and LeuD.

The catalysed reaction is (2R,3S)-3-isopropylmalate = (2S)-2-isopropylmalate. It participates in amino-acid biosynthesis; L-leucine biosynthesis; L-leucine from 3-methyl-2-oxobutanoate: step 2/4. Functionally, catalyzes the isomerization between 2-isopropylmalate and 3-isopropylmalate, via the formation of 2-isopropylmaleate. This chain is 3-isopropylmalate dehydratase small subunit, found in Anaeromyxobacter dehalogenans (strain 2CP-C).